Consider the following 109-residue polypeptide: Putative ankyrin repeat protein L482 (109 aa).

4 ANK repeats span residues 1–26 (YLTE…NITT), 27–56 (NNNY…NIRS), 57–86 (ENNL…DIRS), and 88–109 (NNYA…YLVA).

The chain is Putative ankyrin repeat protein L482 from Acanthamoeba polyphaga (Amoeba).